Reading from the N-terminus, the 463-residue chain is Argininosuccinate lyase (463 aa).

The protein belongs to the lyase 1 family. Argininosuccinate lyase subfamily.

It is found in the cytoplasm. It carries out the reaction 2-(N(omega)-L-arginino)succinate = fumarate + L-arginine. Its pathway is amino-acid biosynthesis; L-arginine biosynthesis; L-arginine from L-ornithine and carbamoyl phosphate: step 3/3. The chain is Argininosuccinate lyase from Methylorubrum populi (strain ATCC BAA-705 / NCIMB 13946 / BJ001) (Methylobacterium populi).